The sequence spans 184 residues: MNWRSERIWIELITGSRKISNFCWACILFLGSLGFLLVGTSSYLGRNLISLFPSQQIIFFPQGIVMSFYGIAGLFISSYLWCTISWNVGSGYDRFDRKEGVVCIFRWGFPGINRRIFLRFLMRDIQSIRMEVKEGLYSRRVLYMEIRGQGAIPLTRTDENLTPREIEQKAAESAYFLRVPIEVF.

2 helical membrane-spanning segments follow: residues 19–39 (ISNF…LLVG) and 57–77 (IIFF…LFIS).

This sequence belongs to the Ycf4 family.

Its subcellular location is the plastid. It localises to the chloroplast thylakoid membrane. Functionally, seems to be required for the assembly of the photosystem I complex. This Drimys granadensis protein is Photosystem I assembly protein Ycf4.